A 207-amino-acid chain; its full sequence is Large ribosomal subunit protein uL4 (207 aa).

The interval 44–78 is disordered; sequence MRQGTHKTKNRAEVSGGGRKPWRQKGTGRARQGSI.

This sequence belongs to the universal ribosomal protein uL4 family. In terms of assembly, part of the 50S ribosomal subunit.

One of the primary rRNA binding proteins, this protein initially binds near the 5'-end of the 23S rRNA. It is important during the early stages of 50S assembly. It makes multiple contacts with different domains of the 23S rRNA in the assembled 50S subunit and ribosome. Its function is as follows. Forms part of the polypeptide exit tunnel. The chain is Large ribosomal subunit protein uL4 from Geobacillus kaustophilus (strain HTA426).